A 439-amino-acid polypeptide reads, in one-letter code: MSTIFALCTPWGKSGVAVIRVSGQDAVKTFMHFKISNAIKPRVATFTPLYNAAHEVIDEVIVVYFSAPNSFTGEDVVELHTHGSIAVIRMILCELGKIFIPAGPGEFSLRAFLNNKVDLTRAEAIVDLINAETEMQAKQAIRQMSGSLEKLYQSWRQQLIDVLSNMEAYIDFPEEVTSSAVENISFLLDKIKESLENHLNDGRKGEILRQGIYVAILGEPNSGKSTLFNHLAKRDIAIVSEYAGTTRDVLETHIDIAGYPIVIIDTAGIRDSNDPVEQEGIRRAKLKAESADFKIIMLPYEKKDALNNEIIDLIDDRSICVLSKSDSIITQNLININNINFIPVSVCCNLGIEHLLSAIQKKVEADFKFCSTSPFITSERQRVHIQNAVNILKNISFELPMELISEDLRLSVRELEKVVGVISNEEILDNVFGKFCIGK.

Arginine 20, glutamate 78, and lysine 116 together coordinate (6S)-5-formyl-5,6,7,8-tetrahydrofolate. The 154-residue stretch at 211–364 (GIYVAILGEP…LLSAIQKKVE (154 aa)) folds into the TrmE-type G domain. GTP-binding positions include 221–226 (NSGKST), 240–246 (SEYAGTT), and 265–268 (DTAG). The Mg(2+) site is built by serine 225 and threonine 246. Position 439 (lysine 439) interacts with (6S)-5-formyl-5,6,7,8-tetrahydrofolate.

It belongs to the TRAFAC class TrmE-Era-EngA-EngB-Septin-like GTPase superfamily. TrmE GTPase family. As to quaternary structure, homodimer. Heterotetramer of two MnmE and two MnmG subunits. Requires K(+) as cofactor.

The protein localises to the cytoplasm. Functionally, exhibits a very high intrinsic GTPase hydrolysis rate. Involved in the addition of a carboxymethylaminomethyl (cmnm) group at the wobble position (U34) of certain tRNAs, forming tRNA-cmnm(5)s(2)U34. In Ehrlichia ruminantium (strain Welgevonden), this protein is tRNA modification GTPase MnmE.